Consider the following 612-residue polypeptide: Dihydroxy-acid dehydratase (612 aa).

Asp81 provides a ligand contact to Mg(2+). Residue Cys122 coordinates [2Fe-2S] cluster. Mg(2+) is bound by residues Asp123 and Lys124. Lys124 is subject to N6-carboxylysine. Residue Cys193 coordinates [2Fe-2S] cluster. Glu489 lines the Mg(2+) pocket. Ser515 acts as the Proton acceptor in catalysis.

Belongs to the IlvD/Edd family. As to quaternary structure, homodimer. It depends on [2Fe-2S] cluster as a cofactor. Mg(2+) serves as cofactor.

The catalysed reaction is (2R)-2,3-dihydroxy-3-methylbutanoate = 3-methyl-2-oxobutanoate + H2O. The enzyme catalyses (2R,3R)-2,3-dihydroxy-3-methylpentanoate = (S)-3-methyl-2-oxopentanoate + H2O. The protein operates within amino-acid biosynthesis; L-isoleucine biosynthesis; L-isoleucine from 2-oxobutanoate: step 3/4. It participates in amino-acid biosynthesis; L-valine biosynthesis; L-valine from pyruvate: step 3/4. In terms of biological role, functions in the biosynthesis of branched-chain amino acids. Catalyzes the dehydration of (2R,3R)-2,3-dihydroxy-3-methylpentanoate (2,3-dihydroxy-3-methylvalerate) into 2-oxo-3-methylpentanoate (2-oxo-3-methylvalerate) and of (2R)-2,3-dihydroxy-3-methylbutanoate (2,3-dihydroxyisovalerate) into 2-oxo-3-methylbutanoate (2-oxoisovalerate), the penultimate precursor to L-isoleucine and L-valine, respectively. The sequence is that of Dihydroxy-acid dehydratase from Teredinibacter turnerae (strain ATCC 39867 / T7901).